The sequence spans 514 residues: ATP synthase subunit alpha (514 aa).

170–177 serves as a coordination point for ATP; sequence GDRQIGKT.

The protein belongs to the ATPase alpha/beta chains family. As to quaternary structure, F-type ATPases have 2 components, CF(1) - the catalytic core - and CF(0) - the membrane proton channel. CF(1) has five subunits: alpha(3), beta(3), gamma(1), delta(1), epsilon(1). CF(0) has three main subunits: a(1), b(2) and c(9-12). The alpha and beta chains form an alternating ring which encloses part of the gamma chain. CF(1) is attached to CF(0) by a central stalk formed by the gamma and epsilon chains, while a peripheral stalk is formed by the delta and b chains.

Its subcellular location is the cell inner membrane. The enzyme catalyses ATP + H2O + 4 H(+)(in) = ADP + phosphate + 5 H(+)(out). Its function is as follows. Produces ATP from ADP in the presence of a proton gradient across the membrane. The alpha chain is a regulatory subunit. This chain is ATP synthase subunit alpha, found in Pseudomonas entomophila (strain L48).